The sequence spans 21 residues: GLLASLGKVLGGYLAEKLKPK.

As to expression, expressed by the skin dorsal glands.

The protein resides in the secreted. Has no antimicrobial activity. Strongly inhibits the formation of NO by neuronal nitric oxide synthase at micromolar concentrations. The polypeptide is Dahlein-5.5 (Ranoidea dahlii (Dahl's aquatic frog)).